The chain runs to 237 residues: Segregation and condensation protein A (237 aa).

The protein belongs to the ScpA family. In terms of assembly, component of a cohesin-like complex composed of ScpA, ScpB and the Smc homodimer, in which ScpA and ScpB bind to the head domain of Smc. The presence of the three proteins is required for the association of the complex with DNA.

The protein localises to the cytoplasm. In terms of biological role, participates in chromosomal partition during cell division. May act via the formation of a condensin-like complex containing Smc and ScpB that pull DNA away from mid-cell into both cell halves. The protein is Segregation and condensation protein A of Streptococcus thermophilus (strain CNRZ 1066).